Consider the following 452-residue polypeptide: Netrin-5 (452 aa).

An N-terminal signal peptide occupies residues Met-1–Ser-34. 11 disulfides stabilise this stretch: Cys-173-Cys-182, Cys-175-Cys-191, Cys-193-Cys-202, Cys-205-Cys-225, Cys-228-Cys-240, Cys-230-Cys-247, Cys-249-Cys-258, Cys-261-Cys-275, Cys-298-Cys-376, Cys-302-Cys-378, and Cys-317-Cys-438. 2 Laminin EGF-like domains span residues Cys-173–Pro-227 and Cys-228–Arg-277. Residues Cys-298–Cys-438 form the NTR domain. A glycan (N-linked (GlcNAc...) asparagine) is linked at Asn-303.

The protein resides in the secreted. In terms of biological role, plays a role in neurogenesis. Prevents motor neuron cell body migration out of the neural tube. The protein is Netrin-5 (Ntn5) of Mus musculus (Mouse).